The sequence spans 689 residues: Elongation factor G (689 aa).

The tr-type G domain maps to 8–282 (LNTRNIGIMA…AVVDYLPSPL (275 aa)). GTP is bound by residues 17 to 24 (AHIDAGKT), 81 to 85 (DTPGH), and 135 to 138 (NKMD).

Belongs to the TRAFAC class translation factor GTPase superfamily. Classic translation factor GTPase family. EF-G/EF-2 subfamily.

The protein resides in the cytoplasm. Functionally, catalyzes the GTP-dependent ribosomal translocation step during translation elongation. During this step, the ribosome changes from the pre-translocational (PRE) to the post-translocational (POST) state as the newly formed A-site-bound peptidyl-tRNA and P-site-bound deacylated tRNA move to the P and E sites, respectively. Catalyzes the coordinated movement of the two tRNA molecules, the mRNA and conformational changes in the ribosome. The chain is Elongation factor G from Mycoplasma mycoides subsp. mycoides SC (strain CCUG 32753 / NCTC 10114 / PG1).